The following is a 136-amino-acid chain: DUF35 domain-containing scaffold protein (136 aa).

Residues C25, C38, and C41 each contribute to the Zn(2+) site.

It belongs to the scaffold protein DUF35 family. Interacts with acetoacetyl-CoA thiolase and HMG-CoA synthase (HMGCS) that catalyzes the first and second step in the mevalonate pathway, respectively.

In terms of biological role, functions as a scaffold to connect the acetoacetyl-CoA thiolase and HMG-CoA synthase (HMGCS) dimers in the channeling thiolase/HMGCS complex, which allows for efficient coupling of the endergonic thiolase reaction with the exergonic HMGCS reaction. The polypeptide is DUF35 domain-containing scaffold protein (Pyrococcus furiosus (strain ATCC 43587 / DSM 3638 / JCM 8422 / Vc1)).